The primary structure comprises 53 residues: Ovomucoid (53 aa).

The Kazal-like domain maps to 3 to 53 (VDCSEYPKPGCMMERLPLCGSDNKTYNDKCNFCNAVVESNGTLTLNHFGEC). Disulfide bonds link C5–C35, C13–C32, and C21–C53. N42 is a glycosylation site (N-linked (GlcNAc...) asparagine).

Its subcellular location is the secreted. The chain is Ovomucoid from Turnix sylvaticus (Common buttonquail).